Here is a 740-residue protein sequence, read N- to C-terminus: Autotransporter adhesin BtaE (740 aa).

The first 11 residues, 1–11 (MFGLSVNHAYA), serve as a signal peptide directing secretion. The segment at 12-647 (GPGIFINDGT…LQTLDQANAY (636 aa)) is surface exposed passenger domain. The tract at residues 648–686 (TDKKFGKLNEDIVATRIEARQAAAIGLAAASLRYDDRPG) is outer membrane translocation of the passenger domain. 4 beta stranded membrane-spanning segments follow: residues 686–696 (GKISAAIGGGF), 700–710 (EGAVALGLGHT), 719–725 (NLSAATS), and 728–739 (NWGMGAGFSYTF). Positions 687–740 (KISAAIGGGFWRGEGAVALGLGHTSEDQRMRSNLSAATSGGNWGMGAGFSYTFN) are translocator domain.

The protein belongs to the autotransporter-2 (AT-2) (TC 1.B.40) family. Homotrimer.

The protein localises to the cell surface. Its subcellular location is the cell outer membrane. Its function is as follows. Binds to hyaluronic acid and epithelial cells, and is required for full virulence in the mouse model. The sequence is that of Autotransporter adhesin BtaE from Brucella suis biovar 1 (strain 1330).